The chain runs to 249 residues: Probable transcriptional regulatory protein IL1088 (249 aa).

The protein belongs to the TACO1 family.

Its subcellular location is the cytoplasm. The polypeptide is Probable transcriptional regulatory protein IL1088 (Idiomarina loihiensis (strain ATCC BAA-735 / DSM 15497 / L2-TR)).